Reading from the N-terminus, the 60-residue chain is Light-harvesting protein B-800/850 alpha chain (60 aa).

Over 1 to 14 (MNNAKIWTVVKPST) the chain is Cytoplasmic. The chain crosses the membrane as a helical span at residues 15 to 35 (GIPLILGAVAVAALIVHAGLL). H31 provides a ligand contact to a bacteriochlorophyll. Residues 36–60 (TNTTWFANYWNGNPMATVVAVAPAQ) lie on the Periplasmic side of the membrane.

This sequence belongs to the antenna complex alpha subunit family. In terms of assembly, the core complex is formed by different alpha and beta chains, binding bacteriochlorophyll molecules, and arranged most probably in tetrameric structures disposed around the reaction center. The non-pigmented gamma chains may constitute additional components.

It is found in the cell inner membrane. Antenna complexes are light-harvesting systems, which transfer the excitation energy to the reaction centers. This Rhodobacter capsulatus (Rhodopseudomonas capsulata) protein is Light-harvesting protein B-800/850 alpha chain (pucA).